Consider the following 187-residue polypeptide: Probable chorismate pyruvate-lyase (187 aa).

Substrate contacts are provided by R80, L117, and E176.

The protein belongs to the UbiC family.

It localises to the cytoplasm. It catalyses the reaction chorismate = 4-hydroxybenzoate + pyruvate. It functions in the pathway cofactor biosynthesis; ubiquinone biosynthesis. Functionally, removes the pyruvyl group from chorismate, with concomitant aromatization of the ring, to provide 4-hydroxybenzoate (4HB) for the ubiquinone pathway. This Halorhodospira halophila (strain DSM 244 / SL1) (Ectothiorhodospira halophila (strain DSM 244 / SL1)) protein is Probable chorismate pyruvate-lyase.